We begin with the raw amino-acid sequence, 201 residues long: Recombination protein RecR (201 aa).

The C4-type zinc-finger motif lies at 60–75 (CKVCGNIDTQNPCTVC). The region spanning 83-178 (SIIVVVADVA…KVTRLAHGVP (96 aa)) is the Toprim domain.

Belongs to the RecR family.

Functionally, may play a role in DNA repair. It seems to be involved in an RecBC-independent recombinational process of DNA repair. It may act with RecF and RecO. This chain is Recombination protein RecR, found in Rhodopseudomonas palustris (strain BisB18).